The primary structure comprises 478 residues: UDP-N-acetylmuramate--L-alanine ligase (478 aa).

125–131 serves as a coordination point for ATP; it reads GTHGKTT.

The protein belongs to the MurCDEF family.

It is found in the cytoplasm. It carries out the reaction UDP-N-acetyl-alpha-D-muramate + L-alanine + ATP = UDP-N-acetyl-alpha-D-muramoyl-L-alanine + ADP + phosphate + H(+). Its pathway is cell wall biogenesis; peptidoglycan biosynthesis. In terms of biological role, cell wall formation. In Dichelobacter nodosus (strain VCS1703A), this protein is UDP-N-acetylmuramate--L-alanine ligase.